The chain runs to 59 residues: Large ribosomal subunit protein bL32 (59 aa).

It belongs to the bacterial ribosomal protein bL32 family.

The protein is Large ribosomal subunit protein bL32 of Limosilactobacillus reuteri (strain DSM 20016) (Lactobacillus reuteri).